The primary structure comprises 686 residues: Myb-related protein B (686 aa).

The interval 1 to 28 (MARRSRGEDQDELHCQDTDSDVPEQRDG) is disordered. 3 consecutive HTH myb-type domains span residues 26-77 (RDGR…LRVL), 78-133 (NPDL…NPEV), and 134-184 (KKSS…KRKV). 3 DNA-binding regions (H-T-H motif) span residues 54 to 77 (WKFLASHFPNRSDQQCQYRWLRVL), 106 to 129 (WTLIAKHLKGRLGKQCRERWHNHL), and 157 to 180 (WAEIAKLLPGRTDNAVKNHWNSTI). Disordered regions lie at residues 315–355 (CDLT…VTEY) and 493–512 (YVVDNTPHTPTPFKNALEKY). Residues 326–343 (PSAGSSSSSNSPVRQTPS) show a composition bias toward low complexity.

As to quaternary structure, component of the DREAM complex. As to expression, expressed in hematopoietic and non hematopoietic cells.

It localises to the nucleus. Its function is as follows. Represses v-myb- and c-myb-mediated activation of the mim-1 gene, probably by competing with other myb proteins for binding sites. It is an inhibitory member of the myb family. The protein is Myb-related protein B (MYBL2) of Gallus gallus (Chicken).